A 214-amino-acid polypeptide reads, in one-letter code: Osteoclast-stimulating factor 1 (214 aa).

The SH3 domain maps to 12–71; sequence GQVKVFRALFTFDPRTPDELYFEEGDILYISDTSDTNWWKGTCRGRTGLIPSNYVAEQAE. ANK repeat units lie at residues 72–101, 105–135, and 139–168; these read TIDHPMHEAAKRGNLSWLRECVENKVGING, AGNTALYWACHGGHKDVVELLLNQPSVELNQ, and LGDTVLHAAAWKGYSDIVEMLLDKNARTDI.

Ubiquitously expressed.

It is found in the cytoplasm. Functionally, induces bone resorption, acting probably through a signaling cascade which results in the secretion of factor(s) enhancing osteoclast formation and activity. The chain is Osteoclast-stimulating factor 1 (ostf1) from Monopterus albus (Swamp eel).